The following is a 289-amino-acid chain: Cyclo(L-tyrosyl-L-tyrosyl) synthase (289 aa).

The tract at residues 1–48 is disordered; it reads MSYVAAEPGVLISPTDDLQSPRSAPAAHDENADGITGGTRDDSAPNSR. S88 (nucleophile) is an active-site residue. Residues N91, 229–233, and Y253 contribute to the substrate site; that span reads YICAE.

The protein belongs to the CDPS family. As to quaternary structure, homodimer.

The enzyme catalyses 2 L-tyrosyl-tRNA(Tyr) = cyclo(L-tyrosyl-L-tyrosyl) + 2 tRNA(Tyr). Functionally, involved in the biosynthesis of mycocyclosin. It uses activated amino acids in the form of aminoacyl-tRNAs (aa-tRNAs) as substrates to catalyze the ATP-independent formation of cyclodipeptides which are intermediates in diketopiperazine (DKP) biosynthetic pathways. Catalyzes the formation of cyclo(L-Tyr-L-Tyr) (cYY) from L-tyrosyl-tRNA(Tyr). The protein is Cyclo(L-tyrosyl-L-tyrosyl) synthase of Mycobacterium tuberculosis (strain CDC 1551 / Oshkosh).